Here is a 333-residue protein sequence, read N- to C-terminus: Fructose-1,6-bisphosphatase class 1 (333 aa).

Mg(2+) contacts are provided by E90, D113, L115, and D116. Residues 116–119 (DGSS), N209, Y242, and K272 contribute to the substrate site. A Mg(2+)-binding site is contributed by E278.

Belongs to the FBPase class 1 family. In terms of assembly, homotetramer. Mg(2+) is required as a cofactor.

Its subcellular location is the cytoplasm. It catalyses the reaction beta-D-fructose 1,6-bisphosphate + H2O = beta-D-fructose 6-phosphate + phosphate. Its pathway is carbohydrate biosynthesis; gluconeogenesis. The chain is Fructose-1,6-bisphosphatase class 1 from Pasteurella multocida (strain Pm70).